We begin with the raw amino-acid sequence, 172 residues long: Translation initiation factor IF-3 (172 aa).

The protein belongs to the IF-3 family. In terms of assembly, monomer.

It is found in the cytoplasm. IF-3 binds to the 30S ribosomal subunit and shifts the equilibrium between 70S ribosomes and their 50S and 30S subunits in favor of the free subunits, thus enhancing the availability of 30S subunits on which protein synthesis initiation begins. The chain is Translation initiation factor IF-3 from Campylobacter jejuni subsp. doylei (strain ATCC BAA-1458 / RM4099 / 269.97).